A 99-amino-acid chain; its full sequence is MASAKPKKKNPRLASGRKRVRQDIKINAANTSLRSKYRTAVKNVEKAVLAGDKTKATEQFAKMQAVVDTVADKGIFHKNKAARDKSRLSAKVKALALAA.

The span at 1-20 (MASAKPKKKNPRLASGRKRV) shows a compositional bias: basic residues. A disordered region spans residues 1–21 (MASAKPKKKNPRLASGRKRVR).

Belongs to the bacterial ribosomal protein bS20 family.

Its function is as follows. Binds directly to 16S ribosomal RNA. The chain is Small ribosomal subunit protein bS20 from Verminephrobacter eiseniae (strain EF01-2).